Consider the following 243-residue polypeptide: Proteasome subunit beta 1 (243 aa).

Positions 1–14 are enriched in polar residues; it reads MRAPQHNSDFSRTV. A disordered region spans residues 1–34; the sequence is MRAPQHNSDFSRTVDQLADDPNPYEPEIGSMPQN. Residues 1–48 constitute a propeptide, removed in mature form; by autocatalysis; it reads MRAPQHNSDFSRTVDQLADDPNPYEPEIGSMPQNDLTRADLDNVNKTG. The active-site Nucleophile is threonine 49.

Belongs to the peptidase T1B family. As to quaternary structure, the 20S proteasome core is composed of 14 alpha and 14 beta subunits that assemble into four stacked heptameric rings, resulting in a barrel-shaped structure. The two inner rings, each composed of seven catalytic beta subunits, are sandwiched by two outer rings, each composed of seven alpha subunits. The catalytic chamber with the active sites is on the inside of the barrel. Has a gated structure, the ends of the cylinder being occluded by the N-termini of the alpha-subunits. Is capped at one or both ends by the proteasome regulatory ATPase, PAN.

Its subcellular location is the cytoplasm. The catalysed reaction is Cleavage of peptide bonds with very broad specificity.. Its activity is regulated as follows. The formation of the proteasomal ATPase PAN-20S proteasome complex, via the docking of the C-termini of PAN into the intersubunit pockets in the alpha-rings, triggers opening of the gate for substrate entry. Interconversion between the open-gate and close-gate conformations leads to a dynamic regulation of the 20S proteasome proteolysis activity. Component of the proteasome core, a large protease complex with broad specificity involved in protein degradation. In Haloterrigena turkmenica (strain ATCC 51198 / DSM 5511 / JCM 9101 / NCIMB 13204 / VKM B-1734 / 4k) (Halococcus turkmenicus), this protein is Proteasome subunit beta 1.